A 228-amino-acid polypeptide reads, in one-letter code: UPF0758 protein CLK_2387 (228 aa).

The MPN domain occupies lysine 106–isoleucine 228. Residues histidine 177, histidine 179, and aspartate 190 each coordinate Zn(2+). The JAMM motif motif lies at histidine 177–aspartate 190.

This sequence belongs to the UPF0758 family.

This is UPF0758 protein CLK_2387 from Clostridium botulinum (strain Loch Maree / Type A3).